Here is a 440-residue protein sequence, read N- to C-terminus: Ferredoxin--NADP reductase (440 aa).

Residues 17–75 (SRVFVYEVVGMRQNEETDQTNYPIRKSGSVFIRVPYNRMNQEMQRITRLGGKIVSIQTV) form the CpcD-like domain. The segment at 98 to 142 (AKSEGNGKATPVKTDSGAKGFAKPPAEEQLKKKDNKGNTMTQAKA) is disordered. Residues 122–133 (PAEEQLKKKDNK) show a composition bias toward basic and acidic residues. Residues 155-279 (NAPFIGKVIS…TGPVGKEMLL (125 aa)) form the FAD-binding FR-type domain. Residues 214–217 (RLYS), 235–237 (CVR), Tyr-241, 253–255 (VCS), and Thr-294 each bind FAD. Residues Ser-217 and Arg-237 each coordinate NADP(+). NADP(+) contacts are provided by residues Thr-294, 330-331 (VP), 360-361 (SR), 370-374 (RMYIQ), 399-400 (GL), and Glu-438.

It belongs to the ferredoxin--NADP reductase type 1 family. FAD serves as cofactor.

The protein resides in the cellular thylakoid membrane. It carries out the reaction 2 reduced [2Fe-2S]-[ferredoxin] + NADP(+) + H(+) = 2 oxidized [2Fe-2S]-[ferredoxin] + NADPH. This is Ferredoxin--NADP reductase (petH) from Nostoc sp. (strain PCC 7120 / SAG 25.82 / UTEX 2576).